A 473-amino-acid chain; its full sequence is ATP synthase subunit beta (473 aa).

158-165 (GGAGVGKT) lines the ATP pocket.

The protein belongs to the ATPase alpha/beta chains family. F-type ATPases have 2 components, CF(1) - the catalytic core - and CF(0) - the membrane proton channel. CF(1) has five subunits: alpha(3), beta(3), gamma(1), delta(1), epsilon(1). CF(0) has three main subunits: a(1), b(2) and c(9-12). The alpha and beta chains form an alternating ring which encloses part of the gamma chain. CF(1) is attached to CF(0) by a central stalk formed by the gamma and epsilon chains, while a peripheral stalk is formed by the delta and b chains.

Its subcellular location is the cell membrane. It catalyses the reaction ATP + H2O + 4 H(+)(in) = ADP + phosphate + 5 H(+)(out). Produces ATP from ADP in the presence of a proton gradient across the membrane. The catalytic sites are hosted primarily by the beta subunits. This Bacillus caldotenax protein is ATP synthase subunit beta.